Here is a 201-residue protein sequence, read N- to C-terminus: Small ribosomal subunit protein uS4 (201 aa).

Residues 91 to 151 (SRLDNVVYRA…EKSQKMNWFE (61 aa)) enclose the S4 RNA-binding domain.

The protein belongs to the universal ribosomal protein uS4 family. In terms of assembly, part of the 30S ribosomal subunit. Contacts protein S5. The interaction surface between S4 and S5 is involved in control of translational fidelity.

Functionally, one of the primary rRNA binding proteins, it binds directly to 16S rRNA where it nucleates assembly of the body of the 30S subunit. Its function is as follows. With S5 and S12 plays an important role in translational accuracy. The chain is Small ribosomal subunit protein uS4 from Corynebacterium efficiens (strain DSM 44549 / YS-314 / AJ 12310 / JCM 11189 / NBRC 100395).